A 375-amino-acid chain; its full sequence is Membrane progesterone receptor epsilon (375 aa).

Residues 1 to 39 (MPRRLQQRGAGVKGPPASTSRRSHPASASAPRSPPAATT) are disordered. The Cytoplasmic segment spans residues 1-84 (MPRRLQQRGA…VLKPTNETLN (84 aa)). Positions 15 to 39 (PPASTSRRSHPASASAPRSPPAATT) are enriched in low complexity. The helical transmembrane segment at 85 to 105 (FWTHFIPLLLFLSKFCRLFFL) threads the bilayer. The Extracellular segment spans residues 106-114 (GGSDVPFHH). The chain crosses the membrane as a helical span at residues 115–135 (PWLLPLWCYASGVLLTFAMSC). Residues 136 to 160 (TAHVFSCLSLRLRAAFFYLDYASIS) are Cytoplasmic-facing. Residues 161–181 (YYGFGSTVAYYYYLLPSLSLL) form a helical membrane-spanning segment. Topologically, residues 182-203 (DARVMTPYVQQRLGWHVDCTRL) are extracellular. The chain crosses the membrane as a helical span at residues 204–224 (IAVYRALVLPVAFVLAVACTV). Residues 225–241 (ACCKSRTDWCSYPFALR) are Cytoplasmic-facing. The chain crosses the membrane as a helical span at residues 242 to 262 (TFVFVMPLSMACPIMLESWLF). Topologically, residues 263-299 (DLRGENPTLFVHFYRRYFWLVVAAFFNVSKIPERIQP) are extracellular. The helical transmembrane segment at 300–320 (GLFDIIGHSHQLFHIFTFLSI) threads the bilayer. Over 321–341 (YDQVYYVEEGLRQFLQAPPAA) the chain is Cytoplasmic. A helical membrane pass occupies residues 342–362 (PTFSGTVGYMLLLVVCLGLVI). Over 363–375 (RKFLNSTEFCSKK) the chain is Extracellular.

It belongs to the ADIPOR family. In terms of assembly, homodimer.

It is found in the cell membrane. Plasma membrane progesterone (P4) receptor coupled to G proteins. Seems to act through a G(s) mediated pathway. May be involved in regulating rapid P4 signaling in the nervous system. Also binds dehydroepiandrosterone (DHEA), pregnanolone, pregnenolone and allopregnanolone. This chain is Membrane progesterone receptor epsilon, found in Mus musculus (Mouse).